We begin with the raw amino-acid sequence, 180 residues long: Non-specific lipid transfer protein GPI-anchored 3 (180 aa).

A signal peptide spans 1–22 (MEAVRFAVAVVLVFCYVTSSNA). 4 disulfides stabilise this stretch: C41–C78, C48–C62, C63–C104, and C76–C113. N-linked (GlcNAc...) asparagine glycans are attached at residues N91 and N120. 2 stretches are compositionally biased toward low complexity: residues 116-125 (SAGTNSSSTP) and 133-156 (PASS…TAKP). A disordered region spans residues 116-156 (SAGTNSSSTPPATPKTPPASSTSTGTGSGSTGNAAPSTAKP). Residue S158 is the site of GPI-anchor amidated serine attachment. A propeptide spans 159–180 (SAPAINFGGLSFASAVVATLFF) (removed in mature form).

This sequence belongs to the plant LTP family. In terms of tissue distribution, restricted to stamen, pollen and sporophytic tissues. Also detected, at low levels, in stems and leaves.

It is found in the cell membrane. Its function is as follows. Lipid transfer protein involved in seed and ovule maturation and development, probably by regulating the fatty acids homeostasis during suberin and sporopollenin biosynthesis or deposition. In Arabidopsis thaliana (Mouse-ear cress), this protein is Non-specific lipid transfer protein GPI-anchored 3.